The primary structure comprises 386 residues: Acyl-[acyl-carrier-protein] dehydrogenase MbtN (386 aa).

Belongs to the acyl-CoA dehydrogenase family. FAD serves as cofactor.

The protein operates within siderophore biosynthesis; mycobactin biosynthesis. Catalyzes the dehydrogenation at the alpha-beta position of ACP-bound acyl chains. This results in the introduction of a double bond in the lipidic chain, which is further transferred to the epsilon-amino group of lysine residue in the mycobactin core by MbtK. This chain is Acyl-[acyl-carrier-protein] dehydrogenase MbtN (mbtN), found in Mycobacterium bovis (strain ATCC BAA-935 / AF2122/97).